Consider the following 290-residue polypeptide: Glutaredoxin domain-containing cysteine-rich protein 1 (290 aa).

The Glutaredoxin domain occupies 127–234; the sequence is LQQPSADLEF…DLLTKIERVQ (108 aa).

Belongs to the GRXCR1 family. As to expression, in the inner ear, expressed predominantly in sensory hair cells and their stereocilia bundles with higher levels in outer hair cells (OHC) at P1 and in inner hair cells (IHC) at P5. At P1, expression is prominent in each row of stereocilia within bundles including immature shorter stereocilia. Expression is also observed in apical microvilli of sensory cells at P1 and in kinocilia at P1 and P5. In the adult, expression is localized throughout the length of the stereocilia of both OHC and IHC (at protein level).

It localises to the cell projection. The protein localises to the stereocilium. The protein resides in the microvillus. It is found in the kinocilium. May play a role in actin filament architecture in developing stereocilia of sensory cells. This is Glutaredoxin domain-containing cysteine-rich protein 1 (Grxcr1) from Mus musculus (Mouse).